The primary structure comprises 258 residues: uncharacterized protein (258 aa).

Residues 1-23 (MVWCHYILLVLTFFLFTTFFTAA) form the signal peptide. The Cytoplasmic segment spans residues 24 to 64 (CPAIFTWLNSLFRLSNDSPHVVHTSIAEVGDIEDGRVDKDG). Residues 65 to 85 (VLFVDLEFFLGCLPFFFFALV) traverse the membrane as a helical segment. Topologically, residues 86-123 (DQSSSSSVCKPLSPSDAKRSSNSLLRLSLVSSNDSDSS) are extracellular. An N-linked (GlcNAc...) asparagine glycan is attached at asparagine 118. Residues 124–144 (VSVSTFAFFFFFLFFLFFVFT) traverse the membrane as a helical segment. The Cytoplasmic segment spans residues 145–230 (CTFSSELTSS…SSSISFRISS (86 aa)). Residues 231–251 (IFFLCSLVFMWFFNCFSDLNV) form a helical membrane-spanning segment. Residues 252-258 (LLQIKHS) lie on the Extracellular side of the membrane.

Its subcellular location is the membrane. This is an uncharacterized protein from Saccharomyces cerevisiae (strain ATCC 204508 / S288c) (Baker's yeast).